Reading from the N-terminus, the 129-residue chain is MAKEAARVRRRERKNIASGVAHVNSSFNNTTITITDAQGNTIAWSSAGTMGFKGSRKSTPYAAQVAAEDVSKKAQEHGMRTLEVEVAGPGSGRESALRALQAAGFTVTSIRDVTTIPHNGCRPRKRRRV.

Belongs to the universal ribosomal protein uS11 family. In terms of assembly, part of the 30S ribosomal subunit. Interacts with proteins S7 and S18. Binds to IF-3.

In terms of biological role, located on the platform of the 30S subunit, it bridges several disparate RNA helices of the 16S rRNA. Forms part of the Shine-Dalgarno cleft in the 70S ribosome. The protein is Small ribosomal subunit protein uS11 of Bradyrhizobium sp. (strain ORS 278).